The primary structure comprises 508 residues: Cytochrome P450 monooxygenase BipB (508 aa).

Residues 11–31 form a helical membrane-spanning segment; that stretch reads ELAWLLLGPLVLFYVFKLFIY. Cys448 contacts heme.

It belongs to the cytochrome P450 family. Heme serves as cofactor.

It is found in the membrane. It functions in the pathway sesquiterpene biosynthesis. Functionally, cytochrome P450 monooxygenase; part of the minimal biosynthetic bip cluster that mediates the biosynthesis of bridged polycyclic sesquiterpenoids derived from sativene, isosativene, and longifolene. The sesquiterpene cyclase BipA acts as a versatile cyclase that converts farnesyl diphosphate (FPP) into (-)-sativene as the dominant product and (-)-isosativene and (-)-longifolene as minor ones. The cytochrome P450 monooxygenase BipB then hydroxylates different enantiomeric sesquiterpenes, such as (-)-longifolene and (+)-longifolene, at C-15 and C-14. The C-15- or both C-15- and C-14-hydroxylated products are further oxidized by unclustered oxidases, resulting in a structurally diverse array of sesquiterpenoids. The BipB-catalyzed hydroxylation at C-15 serves as an initiator for the oxidation by the unclustered oxidases. In Cochliobolus sativus (Common root rot and spot blotch fungus), this protein is Cytochrome P450 monooxygenase BipB.